Here is a 316-residue protein sequence, read N- to C-terminus: Lipoyl synthase (316 aa).

[4Fe-4S] cluster-binding residues include Cys61, Cys66, Cys72, Cys87, Cys91, Cys94, and Ser301. The 218-residue stretch at 73-290 (FGKGTATFMI…ERAAIEMGFS (218 aa)) folds into the Radical SAM core domain.

It belongs to the radical SAM superfamily. Lipoyl synthase family. [4Fe-4S] cluster is required as a cofactor.

It is found in the cytoplasm. It catalyses the reaction [[Fe-S] cluster scaffold protein carrying a second [4Fe-4S](2+) cluster] + N(6)-octanoyl-L-lysyl-[protein] + 2 oxidized [2Fe-2S]-[ferredoxin] + 2 S-adenosyl-L-methionine + 4 H(+) = [[Fe-S] cluster scaffold protein] + N(6)-[(R)-dihydrolipoyl]-L-lysyl-[protein] + 4 Fe(3+) + 2 hydrogen sulfide + 2 5'-deoxyadenosine + 2 L-methionine + 2 reduced [2Fe-2S]-[ferredoxin]. The protein operates within protein modification; protein lipoylation via endogenous pathway; protein N(6)-(lipoyl)lysine from octanoyl-[acyl-carrier-protein]: step 2/2. In terms of biological role, catalyzes the radical-mediated insertion of two sulfur atoms into the C-6 and C-8 positions of the octanoyl moiety bound to the lipoyl domains of lipoate-dependent enzymes, thereby converting the octanoylated domains into lipoylated derivatives. This is Lipoyl synthase from Nitrosospira multiformis (strain ATCC 25196 / NCIMB 11849 / C 71).